The primary structure comprises 361 residues: Probable dual-specificity RNA methyltransferase RlmN (361 aa).

Glu91 serves as the catalytic Proton acceptor. The 233-residue stretch at 97-329 (QHYGLSVCVT…KKKGGNCVVR (233 aa)) folds into the Radical SAM core domain. Cys104 and Cys340 are disulfide-bonded. Positions 111, 115, and 118 each coordinate [4Fe-4S] cluster. S-adenosyl-L-methionine-binding positions include 163–164 (GE), Ser195, 218–220 (SLH), and Asn296. The active-site S-methylcysteine intermediate is Cys340.

Belongs to the radical SAM superfamily. RlmN family. The cofactor is [4Fe-4S] cluster.

It localises to the cytoplasm. It carries out the reaction adenosine(2503) in 23S rRNA + 2 reduced [2Fe-2S]-[ferredoxin] + 2 S-adenosyl-L-methionine = 2-methyladenosine(2503) in 23S rRNA + 5'-deoxyadenosine + L-methionine + 2 oxidized [2Fe-2S]-[ferredoxin] + S-adenosyl-L-homocysteine. The catalysed reaction is adenosine(37) in tRNA + 2 reduced [2Fe-2S]-[ferredoxin] + 2 S-adenosyl-L-methionine = 2-methyladenosine(37) in tRNA + 5'-deoxyadenosine + L-methionine + 2 oxidized [2Fe-2S]-[ferredoxin] + S-adenosyl-L-homocysteine. In terms of biological role, specifically methylates position 2 of adenine 2503 in 23S rRNA and position 2 of adenine 37 in tRNAs. This chain is Probable dual-specificity RNA methyltransferase RlmN, found in Streptococcus pneumoniae serotype 2 (strain D39 / NCTC 7466).